Reading from the N-terminus, the 119-residue chain is NADH-quinone oxidoreductase subunit A (119 aa).

Transmembrane regions (helical) follow at residues 7–27 (FPVL…VSIG), 63–83 (LVAI…PWGV), and 88–108 (IGWP…LGFA).

The protein belongs to the complex I subunit 3 family. In terms of assembly, NDH-1 is composed of 14 different subunits. Subunits NuoA, H, J, K, L, M, N constitute the membrane sector of the complex.

It localises to the cell inner membrane. The enzyme catalyses a quinone + NADH + 5 H(+)(in) = a quinol + NAD(+) + 4 H(+)(out). NDH-1 shuttles electrons from NADH, via FMN and iron-sulfur (Fe-S) centers, to quinones in the respiratory chain. The immediate electron acceptor for the enzyme in this species is believed to be ubiquinone. Couples the redox reaction to proton translocation (for every two electrons transferred, four hydrogen ions are translocated across the cytoplasmic membrane), and thus conserves the redox energy in a proton gradient. The chain is NADH-quinone oxidoreductase subunit A from Paraburkholderia phytofirmans (strain DSM 17436 / LMG 22146 / PsJN) (Burkholderia phytofirmans).